We begin with the raw amino-acid sequence, 213 residues long: Uracil phosphoribosyltransferase (213 aa).

5-phospho-alpha-D-ribose 1-diphosphate is bound by residues arginine 78, arginine 103, and 130–138 (DPMLATGGS). Uracil-binding positions include isoleucine 193 and 198 to 200 (GDA). Aspartate 199 serves as a coordination point for 5-phospho-alpha-D-ribose 1-diphosphate.

It belongs to the UPRTase family. Mg(2+) is required as a cofactor.

It carries out the reaction UMP + diphosphate = 5-phospho-alpha-D-ribose 1-diphosphate + uracil. It functions in the pathway pyrimidine metabolism; UMP biosynthesis via salvage pathway; UMP from uracil: step 1/1. With respect to regulation, allosterically activated by GTP. Functionally, catalyzes the conversion of uracil and 5-phospho-alpha-D-ribose 1-diphosphate (PRPP) to UMP and diphosphate. This is Uracil phosphoribosyltransferase from Bordetella pertussis (strain Tohama I / ATCC BAA-589 / NCTC 13251).